The chain runs to 299 residues: Fructose-1,6-bisphosphatase class 1 (299 aa).

Mg(2+)-binding residues include glutamate 79, aspartate 98, leucine 100, and aspartate 101. Substrate contacts are provided by residues 101–104 (DGSS), tyrosine 207, and lysine 238. Residue glutamate 244 coordinates Mg(2+).

It belongs to the FBPase class 1 family. Homotetramer. The cofactor is Mg(2+).

Its subcellular location is the cytoplasm. The catalysed reaction is beta-D-fructose 1,6-bisphosphate + H2O = beta-D-fructose 6-phosphate + phosphate. The protein operates within carbohydrate biosynthesis; gluconeogenesis. The protein is Fructose-1,6-bisphosphatase class 1 of Campylobacter curvus (strain 525.92).